Here is a 322-residue protein sequence, read N- to C-terminus: Ferric-anguibactin-binding protein FatB (322 aa).

An N-terminal signal peptide occupies residues 1–22 (MFKSTLNIAVAIVCSSLVTLTG). C23 carries N-palmitoyl cysteine lipidation. A lipid anchor (S-diacylglycerol cysteine) is attached at C23. The Fe/B12 periplasmic-binding domain occupies 57 to 322 (RVAALDMNEV…IDDIIKGYQS (266 aa)).

It belongs to the bacterial solute-binding protein 8 family. Part of an iron transport system composed of the outer membrane receptor FatA, the periplasmic binding protein FatB and the inner membrane proteins FatC and FatD.

It localises to the cell inner membrane. Functionally, involved in the uptake of iron in complex with the siderophore anguibactin. Binds ferric-anguibactin in the periplasm and mediates its transport into the cytoplasm. The protein is Ferric-anguibactin-binding protein FatB of Vibrio anguillarum (strain ATCC 68554 / 775) (Listonella anguillarum).